Reading from the N-terminus, the 172-residue chain is Ribosome maturation factor RimM (172 aa).

The 74-residue stretch at 98-171 (PGEYYYHQIV…KVIVELMEGL (74 aa)) folds into the PRC barrel domain.

Belongs to the RimM family. In terms of assembly, binds ribosomal protein uS19.

Its subcellular location is the cytoplasm. An accessory protein needed during the final step in the assembly of 30S ribosomal subunit, possibly for assembly of the head region. Essential for efficient processing of 16S rRNA. May be needed both before and after RbfA during the maturation of 16S rRNA. It has affinity for free ribosomal 30S subunits but not for 70S ribosomes. The chain is Ribosome maturation factor RimM from Levilactobacillus brevis (strain ATCC 367 / BCRC 12310 / CIP 105137 / JCM 1170 / LMG 11437 / NCIMB 947 / NCTC 947) (Lactobacillus brevis).